A 215-amino-acid chain; its full sequence is Pyridoxine/pyridoxamine 5'-phosphate oxidase (215 aa).

Substrate-binding positions include 9-12 and Lys69; that span reads RRDY. Residues 64-69, 79-80, Lys86, and Gln108 each bind FMN; these read RVLLLK and FT. Positions 126, 130, and 134 each coordinate substrate. FMN-binding positions include 143–144 and Trp188; that span reads QS. 194 to 196 provides a ligand contact to substrate; the sequence is RLH. Arg198 is a binding site for FMN.

Belongs to the pyridoxamine 5'-phosphate oxidase family. Homodimer. FMN is required as a cofactor.

The enzyme catalyses pyridoxamine 5'-phosphate + O2 + H2O = pyridoxal 5'-phosphate + H2O2 + NH4(+). It catalyses the reaction pyridoxine 5'-phosphate + O2 = pyridoxal 5'-phosphate + H2O2. The protein operates within cofactor metabolism; pyridoxal 5'-phosphate salvage; pyridoxal 5'-phosphate from pyridoxamine 5'-phosphate: step 1/1. It functions in the pathway cofactor metabolism; pyridoxal 5'-phosphate salvage; pyridoxal 5'-phosphate from pyridoxine 5'-phosphate: step 1/1. Functionally, catalyzes the oxidation of either pyridoxine 5'-phosphate (PNP) or pyridoxamine 5'-phosphate (PMP) into pyridoxal 5'-phosphate (PLP). This is Pyridoxine/pyridoxamine 5'-phosphate oxidase from Pseudomonas putida (strain W619).